Here is a 477-residue protein sequence, read N- to C-terminus: Homospermidine synthase (477 aa).

This sequence belongs to the saccharopine dehydrogenase family. As to quaternary structure, homodimer. Requires NAD(+) as cofactor.

The enzyme catalyses 2 putrescine = sym-homospermidine + NH4(+). It catalyses the reaction putrescine + spermidine = sym-homospermidine + propane-1,3-diamine. Its function is as follows. Involved in the NAD(+)-dependent synthesis of the polyamine homospermidine from putrescine. The protein is Homospermidine synthase (hss) of Blastochloris viridis (Rhodopseudomonas viridis).